Here is a 178-residue protein sequence, read N- to C-terminus: MMTYIVTILSTIFVVSFVGFSSKPSPIYGGVGLIVSGGVGCGIVLNYGGSFLGLMVFLIYLGGMLVVFGYTTAMAMEEYPEVWVSNNTVLLTFLLGLVGEVVLMIYLLLGEEEVKFEVVLNFNSEGDWVIYDTGDSGMFSEEAMGVAALYSYGYWLVIVSGWSLVTCIIVVMEITRGN.

The next 5 helical transmembrane spans lie at 1-21, 25-45, 48-68, 89-109, and 152-172; these read MMTY…VGFS, SPIY…GIVL, GGSF…LVVF, VLLT…YLLL, and YGYW…IVVM.

The protein belongs to the complex I subunit 6 family.

It is found in the mitochondrion membrane. The enzyme catalyses a ubiquinone + NADH + 5 H(+)(in) = a ubiquinol + NAD(+) + 4 H(+)(out). Its function is as follows. Core subunit of the mitochondrial membrane respiratory chain NADH dehydrogenase (Complex I) that is believed to belong to the minimal assembly required for catalysis. Complex I functions in the transfer of electrons from NADH to the respiratory chain. The immediate electron acceptor for the enzyme is believed to be ubiquinone. The polypeptide is NADH-ubiquinone oxidoreductase chain 6 (MT-ND6) (Pseudosoriculus fumidus (Taiwanese brown-toothed shrew)).